A 290-amino-acid chain; its full sequence is Signal peptidase I (290 aa).

The Cytoplasmic portion of the chain corresponds to 1–13 (MKFLRSVYAFCSS). The helical transmembrane segment at 14–34 (WVGTIVIVLLVIFFIAQAFII) threads the bilayer. At 35–290 (PSRSMVGTLY…KIIKKENATH (256 aa)) the chain is on the extracellular side. Residues Ser-38 and Lys-106 contribute to the active site.

The protein belongs to the peptidase S26 family.

The protein localises to the cell membrane. It carries out the reaction Cleavage of hydrophobic, N-terminal signal or leader sequences from secreted and periplasmic proteins.. This chain is Signal peptidase I (lepB), found in Helicobacter pylori (strain ATCC 700392 / 26695) (Campylobacter pylori).